The sequence spans 392 residues: Acetyl-CoA acetyltransferase (392 aa).

The Acyl-thioester intermediate role is filled by cysteine 87. Catalysis depends on proton acceptor residues histidine 348 and cysteine 378.

Belongs to the thiolase-like superfamily. Thiolase family.

It localises to the cytoplasm. It catalyses the reaction 2 acetyl-CoA = acetoacetyl-CoA + CoA. Its pathway is metabolic intermediate biosynthesis; (R)-mevalonate biosynthesis; (R)-mevalonate from acetyl-CoA: step 1/3. In terms of biological role, involved in the production of polyhydroxyalkonic acids (PHAs), composed primarily of 3-hydroxybutyric acid (3HB) and 3-hydroxyvaleric acid (3HV). The polypeptide is Acetyl-CoA acetyltransferase (phaA) (Chromobacterium violaceum (strain ATCC 12472 / DSM 30191 / JCM 1249 / CCUG 213 / NBRC 12614 / NCIMB 9131 / NCTC 9757 / MK)).